A 509-amino-acid polypeptide reads, in one-letter code: Diacylglycerol kinase 5 (509 aa).

The DAGKc domain maps to 36 to 187 (TPASPVLVFI…IDNWHILMRM (152 aa)). Basic and acidic residues predominate over residues 439-452 (RSVFDPSTPRHQDG). Positions 439 to 509 (RSVFDPSTPR…SNVHGWSHVL (71 aa)) are disordered. Residues 453-467 (AEDYDDNEDDSVAEG) show a composition bias toward acidic residues. Residues 468 to 489 (EEFRKFGAADTFKIPDEGEHSN) show a composition bias toward basic and acidic residues. Residues 490–500 (KKGRASRRRNS) are compositionally biased toward basic residues.

The protein belongs to the eukaryotic diacylglycerol kinase family. Monomer.

It carries out the reaction a 1,2-diacyl-sn-glycerol + ATP = a 1,2-diacyl-sn-glycero-3-phosphate + ADP + H(+). In terms of biological role, phosphorylates the second messenger diacylglycerol (DAG) to generate phosphatidic acid (PA), another important signaling molecule. PA is required for plant development and responses to abiotic stress and pathogen attack. May be involved in the accumulation of PA during cold stress. This chain is Diacylglycerol kinase 5 (DGK5), found in Arabidopsis thaliana (Mouse-ear cress).